Consider the following 955-residue polypeptide: 2-oxoglutarate dehydrogenase E1 component (955 aa).

This sequence belongs to the alpha-ketoglutarate dehydrogenase family. In terms of assembly, homodimer. Part of the 2-oxoglutarate dehydrogenase (OGDH) complex composed of E1 (2-oxoglutarate dehydrogenase), E2 (dihydrolipoamide succinyltransferase) and E3 (dihydrolipoamide dehydrogenase); the complex contains multiple copies of the three enzymatic components (E1, E2 and E3). The cofactor is thiamine diphosphate.

It carries out the reaction N(6)-[(R)-lipoyl]-L-lysyl-[protein] + 2-oxoglutarate + H(+) = N(6)-[(R)-S(8)-succinyldihydrolipoyl]-L-lysyl-[protein] + CO2. E1 component of the 2-oxoglutarate dehydrogenase (OGDH) complex which catalyzes the decarboxylation of 2-oxoglutarate, the first step in the conversion of 2-oxoglutarate to succinyl-CoA and CO(2). In Bacillus cereus (strain AH820), this protein is 2-oxoglutarate dehydrogenase E1 component.